The primary structure comprises 133 residues: MSSFLGKWKLSESHNFDAVMSKLGVSWATRQIGNTVTPTVTFTMDGDKMTMLTESTFKNLSCTFKFGEEFDEKTSDGRNVKSVVEKNSESKLTQTQVDPKNTTVIVREVDGDTMKTTVTVGDVTAIRNYKRLS.

(5Z,8Z,11Z,14Z)-eicosatetraenoate contacts are provided by residues Arg107 and 127–129 (RNY). (9Z)-octadecenoate-binding positions include Arg107 and 127–129 (RNY).

Belongs to the calycin superfamily. Fatty-acid binding protein (FABP) family. Tubercles, muscle layers and body.

It is found in the cytoplasm. Its function is as follows. May play a role in the transport of fatty acids. Binds various fatty acids, such as arachidonic, oleic, palmitic and linolenic acid (in vitro). The polypeptide is 14 kDa fatty acid-binding protein (Schistosoma mansoni (Blood fluke)).